Consider the following 339-residue polypeptide: DNA-directed RNA polymerase subunit alpha (339 aa).

Residues Met1–Glu233 form an alpha N-terminal domain (alpha-NTD) region. Residues Gly266 to Leu339 are alpha C-terminal domain (alpha-CTD).

The protein belongs to the RNA polymerase alpha chain family. In terms of assembly, in plastids the minimal PEP RNA polymerase catalytic core is composed of four subunits: alpha, beta, beta', and beta''. When a (nuclear-encoded) sigma factor is associated with the core the holoenzyme is formed, which can initiate transcription.

It is found in the plastid. Its subcellular location is the chloroplast. The catalysed reaction is RNA(n) + a ribonucleoside 5'-triphosphate = RNA(n+1) + diphosphate. Functionally, DNA-dependent RNA polymerase catalyzes the transcription of DNA into RNA using the four ribonucleoside triphosphates as substrates. The sequence is that of DNA-directed RNA polymerase subunit alpha from Sorghum bicolor (Sorghum).